We begin with the raw amino-acid sequence, 291 residues long: Phosphate-binding protein PstS 2 (291 aa).

The first 21 residues, 1–21 (MKFKKMLTLAAIGLSGFGLVA), serve as a signal peptide directing secretion. Cysteine 22 is lipidated: N-palmitoyl cysteine. Cysteine 22 carries the S-diacylglycerol cysteine lipid modification.

Belongs to the PstS family. The complex is composed of two ATP-binding proteins (PstB), two transmembrane proteins (PstC and PstA) and a solute-binding protein (PstS).

It is found in the cell membrane. Part of the ABC transporter complex PstSACB involved in phosphate import. This chain is Phosphate-binding protein PstS 2 (pstS2), found in Streptococcus pneumoniae serotype 4 (strain ATCC BAA-334 / TIGR4).